The following is a 670-amino-acid chain: ATP synthase subunit alpha 2 (670 aa).

180 to 187 (GDRATGKT) provides a ligand contact to ATP. Positions 525-670 (MPAEDAAGDI…DAEAEARHKR (146 aa)) are disordered. The segment covering 543-588 (ARGDADRDADHGANREVSREVSPEASREVSREVSREVSHEADRDAA) has biased composition (basic and acidic residues). The segment covering 589–599 (ADAARVAGRAP) has biased composition (low complexity). Residues 621–639 (ADGDRASASRPPPDARGDA) are compositionally biased toward basic and acidic residues. Over residues 650–661 (ADANVNADANVD) the composition is skewed to low complexity.

The protein belongs to the ATPase alpha/beta chains family. F-type ATPases have 2 components, CF(1) - the catalytic core - and CF(0) - the membrane proton channel. CF(1) has five subunits: alpha(3), beta(3), gamma(1), delta(1), epsilon(1). CF(0) has three main subunits: a(1), b(2) and c(9-12). The alpha and beta chains form an alternating ring which encloses part of the gamma chain. CF(1) is attached to CF(0) by a central stalk formed by the gamma and epsilon chains, while a peripheral stalk is formed by the delta and b chains.

The protein resides in the cell inner membrane. It catalyses the reaction ATP + H2O + 4 H(+)(in) = ADP + phosphate + 5 H(+)(out). In terms of biological role, produces ATP from ADP in the presence of a proton gradient across the membrane. The alpha chain is a regulatory subunit. The protein is ATP synthase subunit alpha 2 of Burkholderia mallei (strain NCTC 10247).